The sequence spans 400 residues: Exodeoxyribonuclease 7 large subunit (400 aa).

It belongs to the XseA family. As to quaternary structure, heterooligomer composed of large and small subunits.

It localises to the cytoplasm. It catalyses the reaction Exonucleolytic cleavage in either 5'- to 3'- or 3'- to 5'-direction to yield nucleoside 5'-phosphates.. Its function is as follows. Bidirectionally degrades single-stranded DNA into large acid-insoluble oligonucleotides, which are then degraded further into small acid-soluble oligonucleotides. The sequence is that of Exodeoxyribonuclease 7 large subunit from Clostridium perfringens (strain 13 / Type A).